Consider the following 261-residue polypeptide: MNFVQENNQVLYIWGGTISADIEQEVNQLKSIPGVKVNVENAERVLLGGYGQSQFDIILANVSTGNSELVSHLLKLTKPKGKAVFKDDSAAGGAETVRANLLLSGFINIASAEGNVYIAEKPNYEIGSAAKLSLGGGANKAKVAAVWKLDVDDDGEAEERIDEDELLDEEDKVKPSAESLRVCGTTGKRKACKDCSCGLAEELDAESKGAAVAAAQSAKSSCGSCYLGDAFRCATCPYLGMPAFKPGEKIQLSDTQMQADV.

The segment at Val4–Leu134 is N-terminal SAM-like domain. The tract at residues Leu134–Val173 is linker. Residues Cys183, Cys192, Cys195, and Cys197 each coordinate [2Fe-2S] cluster. The interval Cys183–Cys197 is fe-S binding site A. Residues Cys222, Cys225, Cys233, and Cys236 each contribute to the [4Fe-4S] cluster site. Short sequence motifs (cx2C motif) lie at residues Cys222 to Cys225 and Cys233 to Cys236. Residues Cys222–Cys236 are fe-S binding site B.

The protein belongs to the anamorsin family. In terms of assembly, monomer. [2Fe-2S] cluster serves as cofactor. Requires [4Fe-4S] cluster as cofactor.

The protein localises to the cytoplasm. Its subcellular location is the mitochondrion intermembrane space. Functionally, component of the cytosolic iron-sulfur (Fe-S) protein assembly (CIA) machinery. Required for the maturation of extramitochondrial Fe-S proteins. Part of an electron transfer chain functioning in an early step of cytosolic Fe-S biogenesis, facilitating the de novo assembly of a [4Fe-4S] cluster on the cytosolic Fe-S scaffold complex. Electrons are transferred from NADPH via a FAD- and FMN-containing diflavin oxidoreductase. Together with the diflavin oxidoreductase, also required for the assembly of the diferric tyrosyl radical cofactor of ribonucleotide reductase (RNR), probably by providing electrons for reduction during radical cofactor maturation in the catalytic small subunit. This Culex quinquefasciatus (Southern house mosquito) protein is Anamorsin homolog.